Here is a 566-residue protein sequence, read N- to C-terminus: Poly(A) polymerase pla1 (566 aa).

Residues 86–88 (YGS), 99–101 (DID), Asp153, Lys214, Tyr223, and 232–233 (GV) each bind ATP. Positions 99, 101, and 153 each coordinate Mg(2+). Disordered stretches follow at residues 437–463 (HEKL…SENG) and 530–566 (DEVF…VSTA).

The protein belongs to the poly(A) polymerase family. Mg(2+) serves as cofactor. The cofactor is Mn(2+).

It is found in the nucleus. It catalyses the reaction RNA(n) + ATP = RNA(n)-3'-adenine ribonucleotide + diphosphate. In terms of biological role, polymerase that creates the 3'-poly(A) tail of mRNA's. May acquire specificity through interaction with a cleavage and polyadenylation factor (CF I). This is Poly(A) polymerase pla1 (pla1) from Schizosaccharomyces pombe (strain 972 / ATCC 24843) (Fission yeast).